The sequence spans 881 residues: MVNPGPPGLIAGLLLAALSLSSVDGTKALGFVGHGYNMTVSQGHEAKLNCSLQGMEEPEIQWLKDGVPVQSADQMYIPVDEDHWISFLSLKNVERPDAGRYWCEAEHSGRKSVSDAIWVMVEGVPYFTLEPKDLSVTPNSPFNMTCAAVGPPEPLVIFWWVGDSPLGKSESSPSVLQIPGIRERTAFSCEAHNAKGVSSSRTAIVEVKGLPYPPFNVTISKVTGSTATVTWSPGFNSFSLIKSCTIQVQSLHGNREMYSRLTSVPPFAVVLDDLQPLTNHSVRVQCTNEMGASPFSEWITFNTKEKVPQLIPQNVHMTKTDSCLLLDWEDVDPDKEGYNILGFKVQWEQENTTQGELFVQENQANLTKWNPEKDLTIRICIANAAGCGPWSEFLLAGSKEEAGKQRHPHTRMSWVPMVLGILTALVTVVAMTLIFLRKGRKETRFGNMLGSMLGRGGPVIQFTAARSFNRRGPEVMEATLDSIGISDELKSKLKDVLIQQQQFTLGRTLGKGEFGSVREAQLKMEDDTMQKVAVKMLKAEIFCSSDIEEFLREAAFMKEFDHPNVCKLIGVSLRSRTKGRLPVPMVILPFMKHGDLHTFLLMSRIGEEPIALPIQTLVRFMIDICSGMEYLSSKNFIHRDLATRNCMLNEDMTVCVADFGLSKKIYSGDYYRQGCASKLPVKWLALESLADNVYTVHSDVWAFGVTLWEIVTRGQTPYAGVENSEIYSYLTAGNRLKQPPDCLDELYEMMCQCWITEPKRRPSFVDLKRRLEAIWGRLSILSASHDQLYVNLGETCGAAAAVSGLHSAFCKEEDYCAGPSQTCGTSAITSDYRYIVNPGCLREGNEWSSSAQNGEARGLLHEEEEEEEEEEMQEEQVVITL.

Residues 1–28 (MVNPGPPGLIAGLLLAALSLSSVDGTKA) form the signal peptide. Ig-like C2-type domains are found at residues 29–114 (LGFV…KSVS) and 125–206 (PYFT…AIVE). Residues 29–414 (LGFVGHGYNM…QRHPHTRMSW (386 aa)) are Extracellular-facing. N-linked (GlcNAc...) asparagine glycosylation is found at Asn37 and Asn49. A disulfide bond links Cys50 and Cys103. A glycan (N-linked (GlcNAc...) asparagine) is linked at Asn143. Residues Cys146 and Cys189 are joined by a disulfide bond. 2 consecutive Fibronectin type-III domains span residues 213–306 (PPFN…TKEK) and 311–401 (IPQN…SKEE). Asn216, Asn279, Asn351, and Asn365 each carry an N-linked (GlcNAc...) asparagine glycan. Residues 415-435 (VPMVLGILTALVTVVAMTLIF) form a helical membrane-spanning segment. Over 436 to 881 (LRKGRKETRF…MQEEQVVITL (446 aa)) the chain is Cytoplasmic. The Protein kinase domain maps to 503–774 (FTLGRTLGKG…VDLKRRLEAI (272 aa)). ATP contacts are provided by residues 509–517 (LGKGEFGSV) and Lys535. The Proton acceptor role is filled by Asp640. A Phosphotyrosine; by autocatalysis modification is found at Tyr671. Residues 846–881 (EWSSSAQNGEARGLLHEEEEEEEEEEMQEEQVVITL) are disordered. Residues 862 to 874 (EEEEEEEEEEMQE) are compositionally biased toward acidic residues.

The protein belongs to the protein kinase superfamily. Tyr protein kinase family. AXL/UFO subfamily. Tyrosine phosphorylated upon receptor stimulation.

The protein resides in the cell membrane. It carries out the reaction L-tyrosyl-[protein] + ATP = O-phospho-L-tyrosyl-[protein] + ADP + H(+). Its function is as follows. May be involved in cell adhesion processes, particularly in the central nervous system. In Xenopus tropicalis (Western clawed frog), this protein is Tyrosine-protein kinase receptor TYRO3 (tyro3).